A 124-amino-acid chain; its full sequence is KESAAAKFZRZHMBSSTSSASSSNYCNQMMKSRNLTQDRCKPVNTFVHESLADVQAVCSQKNVQCKNGQTNCYQSYSTMSITDCRETGSSKYPNCAYKTTQAQKHIIVACEGNPYVPVHFDASV.

K7 and R10 together coordinate substrate. H12 (proton acceptor) is an active-site residue. Intrachain disulfides connect C26-C84, C40-C95, C58-C110, and C65-C72. N-linked (GlcNAc...) asparagine glycosylation occurs at N34. Residues 41–45, K66, and R85 contribute to the substrate site; that span reads KPVNT. The active-site Proton donor is the H119.

It belongs to the pancreatic ribonuclease family. In terms of assembly, monomer. Interacts with and forms tight 1:1 complexes with RNH1. Dimerization of two such complexes may occur. Interaction with RNH1 inhibits this protein. As to expression, pancreas.

Its subcellular location is the secreted. It carries out the reaction an [RNA] containing cytidine + H2O = an [RNA]-3'-cytidine-3'-phosphate + a 5'-hydroxy-ribonucleotide-3'-[RNA].. The enzyme catalyses an [RNA] containing uridine + H2O = an [RNA]-3'-uridine-3'-phosphate + a 5'-hydroxy-ribonucleotide-3'-[RNA].. Its function is as follows. Endonuclease that catalyzes the cleavage of RNA on the 3' side of pyrimidine nucleotides. Acts on single-stranded and double-stranded RNA. This is Ribonuclease pancreatic (RNASE1) from Eudorcas thomsonii (Thomson's gazelle).